Consider the following 112-residue polypeptide: Integration host factor subunit alpha (112 aa).

The protein belongs to the bacterial histone-like protein family. Heterodimer of an alpha and a beta chain.

Functionally, this protein is one of the two subunits of integration host factor, a specific DNA-binding protein that functions in genetic recombination as well as in transcriptional and translational control. The polypeptide is Integration host factor subunit alpha (Rhizobium leguminosarum bv. trifolii (strain WSM2304)).